The following is a 325-amino-acid chain: NADH-quinone oxidoreductase subunit H (325 aa).

The next 8 helical transmembrane spans lie at 11-31 (ILLS…CGAF), 81-101 (VIFT…FAIV), 114-134 (IGIL…LFAG), 154-174 (LSYE…AGSF), 186-206 (LWNV…GVAV), 237-257 (FFVG…TLFF), 265-285 (LPPF…FILI), and 304-324 (VCLP…LWQA).

It belongs to the complex I subunit 1 family. In terms of assembly, NDH-1 is composed of 13 different subunits. Subunits NuoA, H, J, K, L, M, N constitute the membrane sector of the complex.

It localises to the cell inner membrane. It carries out the reaction a quinone + NADH + 5 H(+)(in) = a quinol + NAD(+) + 4 H(+)(out). In terms of biological role, NDH-1 shuttles electrons from NADH, via FMN and iron-sulfur (Fe-S) centers, to quinones in the respiratory chain. The immediate electron acceptor for the enzyme in this species is believed to be ubiquinone. Couples the redox reaction to proton translocation (for every two electrons transferred, four hydrogen ions are translocated across the cytoplasmic membrane), and thus conserves the redox energy in a proton gradient. This subunit may bind ubiquinone. This Klebsiella pneumoniae (strain 342) protein is NADH-quinone oxidoreductase subunit H.